We begin with the raw amino-acid sequence, 362 residues long: Outer membrane porin F (362 aa).

Positions 1-22 (MMKRNILAVIVPALLVAGTANA) are cleaved as a signal peptide. A beta stranded transmembrane segment spans residues 23–28 (AEIYNK). Position 29 (D29) is a topological domain, periplasmic. The chain crosses the membrane as a beta stranded span at residues 30–45 (GNKVDLYGKAVGLHYF). Over 46–60 (SKGNGENSYGGNGDM) the chain is Extracellular. The chain crosses the membrane as a beta stranded span at residues 61–73 (TYARLGFKGETQI). Over 74 to 75 (NS) the chain is Periplasmic. The beta stranded transmembrane segment at 76-88 (DLTGYGQWEYNFQ) threads the bilayer. Residues 89–104 (GNNSEGADAQTGNKTR) lie on the Extracellular side of the membrane. Residues 105-113 (LAFAGLKYA) traverse the membrane as a beta stranded segment. Topologically, residues 114-115 (DV) are periplasmic. Residues 116 to 122 (GSFDYGR) traverse the membrane as a beta stranded segment. Over 123 to 156 (NYGVVYDALGYTDMLPEFGGDTAYSDDFFVGRVG) the chain is Extracellular. A beta stranded membrane pass occupies residues 157-163 (GVATYRN). The Periplasmic segment spans residues 164–171 (SNFFGLVD). The beta stranded transmembrane segment at 172–181 (GLNFAVQYLG) threads the bilayer. At 182 to 193 (KNERDTARRSNG) the chain is on the extracellular side. The beta stranded transmembrane segment at 194–204 (DGVGGSISYEY) threads the bilayer. A topological domain (periplasmic) is located at residue E205. Residues 206 to 217 (GFGIVGAYGAAD) traverse the membrane as a beta stranded segment. Over 218–232 (RTNLQEAQPLGNGKK) the chain is Extracellular. The chain crosses the membrane as a beta stranded span at residues 233–244 (AEQWATGLKYDA). Residue N245 is a topological domain, periplasmic. A beta stranded transmembrane segment spans residues 246–257 (NIYLAANYGETR). Over 258 to 274 (NATPITNKFTNTSGFAN) the chain is Extracellular. A beta stranded membrane pass occupies residues 275–287 (KTQDVLLVAQYQF). The Periplasmic portion of the chain corresponds to 288–289 (DF). Residues 290–303 (GLRPSIAYTKSKAK) traverse the membrane as a beta stranded segment. At 304-313 (DVEGIGDVDL) the chain is on the extracellular side. A beta stranded membrane pass occupies residues 314–325 (VNYFEVGATYYF). At 326-327 (NK) the chain is on the periplasmic side. Residues 328–337 (NMSTYVDYII) form a beta stranded membrane-spanning segment. Over 338 to 352 (NQIDSDNKLGVGSDD) the chain is Extracellular. A beta stranded membrane pass occupies residues 353–362 (TVAVGIVYQF).

Belongs to the Gram-negative porin family. Homotrimer. Forms mixed heterotrimers with OmpC and with PhoE; other mixed heterotrimers are also probable. As to quaternary structure, (Microbial infection) Trimeric complexes with colicin E3, BtuB and OmpF can be cross-linked and immunoprecipitated.

It is found in the cell outer membrane. Forms pores that allow passive diffusion of small molecules across the outer membrane. In terms of biological role, (Microbial infection) It is also a receptor for the bacteriophage T2. Is the major receptor for colicin E5. Functionally, (Microbial infection) Probably translocates colicin E3 (and other A-type colicins) across the outer membrane. Its function is as follows. (Microbial infection) A mixed OmpC-OmpF heterotrimer is the outer membrane receptor for toxin CdiA-EC536 (ECL_04451); polymorphisms in extracellular loops 4 and 5 of OmpC confer susceptibility to CdiA-EC536-mediated toxicity. The polypeptide is Outer membrane porin F (ompF) (Escherichia coli (strain K12)).